We begin with the raw amino-acid sequence, 309 residues long: Probable L,D-transpeptidase ErfK/SrfK (309 aa).

The N-terminal stretch at 1–21 (MRRITPFFPFFVLLVSHFSLA) is a signal peptide. One can recognise a L,D-TPase catalytic domain in the interval 96–231 (EGIVVNVAEM…VPVGTRVQII (136 aa)). Catalysis depends on His-191, which acts as the Proton donor/acceptor. The active-site Nucleophile is Cys-207.

The protein belongs to the YkuD family.

The protein localises to the periplasm. Its pathway is cell wall biogenesis; peptidoglycan biosynthesis. This is Probable L,D-transpeptidase ErfK/SrfK (erfK) from Salmonella typhimurium (strain LT2 / SGSC1412 / ATCC 700720).